We begin with the raw amino-acid sequence, 1079 residues long: Electrogenic sodium bicarbonate cotransporter 1 (1079 aa).

A required for interaction with AHCYL1 region spans residues 1-62; sequence MEDEAVLDRG…EKREKERISE (62 aa). The Cytoplasmic segment spans residues 1-466; that stretch reads MEDEAVLDRG…FASDFYDALN (466 aa). Tyr-30 is subject to Phosphotyrosine. Basic residues predominate over residues 39–52; sequence YRRRRRHKRKTGHK. Residues 39–78 are disordered; the sequence is YRRRRRHKRKTGHKEKREKERISENYSDKSDVENADESSS. Position 49 is a phosphothreonine; by PKA (Thr-49). The segment covering 53-70 has biased composition (basic and acidic residues); that stretch reads EKREKERISENYSDKSDV. Ser-61, Ser-65, Ser-68, Ser-223, Ser-232, Ser-233, and Ser-245 each carry phosphoserine. Residues 237-265 are disordered; that stretch reads MFTSPDNGSPAMTHRNLTSSSLNDISDKP. Phosphothreonine occurs at positions 249 and 254. Polar residues predominate over residues 251 to 260; that stretch reads RNLTSSSLND. A phosphoserine mark is found at Ser-256, Ser-257, and Ser-262. A helical transmembrane segment spans residues 467 to 491; the sequence is IQSLSAILFIYLATVTNAITFGGLL. The Extracellular segment spans residues 492-501; the sequence is GDATDNMQGV. A helical membrane pass occupies residues 502 to 520; that stretch reads LESFLGTAVSGAIFCLFAG. A topological domain (cytoplasmic) is located at residue Gln-521. A discontinuously helical transmembrane segment spans residues 522-542; the sequence is PLTILSSTGPVLVFERLLFNF. Topologically, residues 543–550 are extracellular; the sequence is SKDHNFDY. A helical transmembrane segment spans residues 551–571; the sequence is LEFRLWIGLWSAFLCLILVAT. Over 572-585 the chain is Cytoplasmic; it reads DASFLVQYFTRFTE. A helical transmembrane segment spans residues 586–609; sequence EGFSSLISFIFIYDAFKKMIKLAD. Residues 610–692 lie on the Extracellular side of the membrane; that stretch reads YYPINSDFKV…GNNCNFVPDV (83 aa). A helical transmembrane segment spans residues 693–710; sequence TLMSFILFLGTYTSSMAL. Over 711–725 the chain is Cytoplasmic; sequence KKFKTSRYFPTTARK. A helical transmembrane segment spans residues 726–745; sequence LISDFAIILSILIFCVIDAL. Residues 746–779 lie on the Extracellular side of the membrane; that stretch reads VGVDTPKLIVPSEFKPTSPNRGWFVPPFGGNPWW. Positions 748 to 779 are interaction with CA4; it reads VDTPKLIVPSEFKPTSPNRGWFVPPFGGNPWW. Residues 780–807 traverse the membrane as a helical segment; it reads VYLAAAIPALLVTILIFMDQQITAVIVN. At 808–819 the chain is on the cytoplasmic side; sequence RKEHKLKKGAGY. Residues 820–836 form a helical membrane-spanning segment; the sequence is HLDLFWVAILMVVCSFM. Residue Ala-837 is a topological domain, extracellular. The discontinuously helical transmembrane segment at 838 to 855 threads the bilayer; the sequence is LPWYVAATVISIAHIDSL. At 856–877 the chain is on the cytoplasmic side; it reads KMETETSAPGEQPKFLGVREQR. A helical transmembrane segment spans residues 878 to 894; that stretch reads VTGTLVFILTGLSVFMA. The Extracellular portion of the chain corresponds to 895-901; that stretch reads PILKFIP. Residues 902 to 918 form a helical membrane-spanning segment; sequence MPVLYGVFLYMGVASLN. The Cytoplasmic segment spans residues 919 to 960; sequence GVQFMDRLKLLLMPLKHQPDFIYLRHVPLRRVHLFTFLQVLC. An intramembrane region (discontinuously helical) is located at residues 961-986; sequence LALLWILKSTVAAIIFPVMILALVAV. Over 987–1079 the chain is Cytoplasmic; it reads RKGMDYLFSQ…STFLERHTSC (93 aa). The interval 1002 to 1004 is CA2-binding; that stretch reads LDD. The segment at 1012 to 1079 is disordered; it reads KKKEDEKKKK…STFLERHTSC (68 aa). Residue Ser-1026 is modified to Phosphoserine; by PKA. A Phosphoserine modification is found at Ser-1029. The tract at residues 1030–1033 is CA2-binding; the sequence is DNDD. A phosphoserine mark is found at Ser-1034 and Ser-1044. The tract at residues 1057–1059 is required for basolateral targeting; sequence FLS. The span at 1062-1079 shows a compositional bias: basic and acidic residues; it reads KPSDREKSSTFLERHTSC. At Ser-1069 the chain carries Phosphoserine.

It belongs to the anion exchanger (TC 2.A.31) family. Homodimer. Interacts with CA2/carbonic anhydrase 2 and CA4/carbonic anhydrase 4 which may regulate transporter activity. Isoform 1 but not isoform 2 interacts with AHCYL1 (via PEST domain when phosphorylated); the interaction increases SLC4A4 isoform 1 activity. Interacts with AHCYL2. Phosphorylation of Ser-1026 by PKA increases the binding of CA2 and changes the Na(+):HCO3(-) stoichiometry of the transporter from 3:1 to 2:1. Phosphorylated in presence of STK39 and dephosphorylated in presence of PP1 phosphatase; phosphorylation seems to inhibit SLC4A4 activity. In terms of processing, N-glycosylated. May not be necessary for the transporter basic functions. As to expression, expressed in colonic mucosa, kidney cortex and to gastric mucosa.

Its subcellular location is the basolateral cell membrane. The protein resides in the cell membrane. It carries out the reaction 2 hydrogencarbonate(out) + Na(+)(out) = 2 hydrogencarbonate(in) + Na(+)(in). It catalyses the reaction 3 hydrogencarbonate(out) + Na(+)(out) = 3 hydrogencarbonate(in) + Na(+)(in). In terms of biological role, electrogenic sodium/bicarbonate cotransporter with a Na(+):HCO3(-) stoichiometry varying from 1:2 to 1:3. May regulate bicarbonate influx/efflux at the basolateral membrane of cells and regulate intracellular pH. This chain is Electrogenic sodium bicarbonate cotransporter 1 (SLC4A4), found in Oryctolagus cuniculus (Rabbit).